Reading from the N-terminus, the 645-residue chain is UvrABC system protein C (645 aa).

The segment at 1-20 (MTDLPPHSSHHPADQGEPLV) is disordered. The region spanning 40 to 118 (YSPGVYRMLS…IKRMKPRFNI (79 aa)) is the GIY-YIG domain. Positions 228-263 (TELQQRLVAEMEQASQELNYERAASIRDRIRGFASI) constitute a UVR domain.

Belongs to the UvrC family. As to quaternary structure, interacts with UvrB in an incision complex.

It localises to the cytoplasm. Its function is as follows. The UvrABC repair system catalyzes the recognition and processing of DNA lesions. UvrC both incises the 5' and 3' sides of the lesion. The N-terminal half is responsible for the 3' incision and the C-terminal half is responsible for the 5' incision. The sequence is that of UvrABC system protein C from Gluconobacter oxydans (strain 621H) (Gluconobacter suboxydans).